The following is a 581-amino-acid chain: A-type ATP synthase subunit A (581 aa).

234–241 (GPFGSGKT) serves as a coordination point for ATP.

It belongs to the ATPase alpha/beta chains family. In terms of assembly, has multiple subunits with at least A(3), B(3), C, D, E, F, H, I and proteolipid K(x).

The protein localises to the cell membrane. The catalysed reaction is ATP + H2O + 4 H(+)(in) = ADP + phosphate + 5 H(+)(out). Component of the A-type ATP synthase that produces ATP from ADP in the presence of a proton gradient across the membrane. The A chain is the catalytic subunit. This is A-type ATP synthase subunit A from Archaeoglobus fulgidus (strain ATCC 49558 / DSM 4304 / JCM 9628 / NBRC 100126 / VC-16).